The sequence spans 176 residues: MRLPYSSSKPIPTNNNNNNNNTNNGISINKIPKSHYSYYQTQENNKPQQSQQHPLLQHQQQQQQQQQQQQQQQQQQQQQQQQQQPQQQPQIATITATISISPSINNIIVNNSPIKTPSKKHRSSSKKSPSSSKKLNKVLSCCFVCQSSISNPFIVKETPKANHYFCSIQCFAQASP.

Residues 1–12 are compositionally biased toward polar residues; sequence MRLPYSSSKPIP. 2 disordered regions span residues 1–88 and 109–132; these read MRLP…PQQQ and VNNS…PSSS. Over residues 13 to 24 the composition is skewed to low complexity; the sequence is TNNNNNNNNTNN. Positions 37 to 46 are enriched in polar residues; that stretch reads SYYQTQENNK. Residues 47 to 88 show a composition bias toward low complexity; it reads PQQSQQHPLLQHQQQQQQQQQQQQQQQQQQQQQQQQQQPQQQ.

This is an uncharacterized protein from Dictyostelium discoideum (Social amoeba).